The following is a 158-amino-acid chain: Small ribosomal subunit protein uS19 (158 aa).

It belongs to the universal ribosomal protein uS19 family.

In terms of biological role, protein S19 forms a complex with S13 that binds strongly to the 16S ribosomal RNA. The protein is Small ribosomal subunit protein uS19 of Pyrobaculum calidifontis (strain DSM 21063 / JCM 11548 / VA1).